We begin with the raw amino-acid sequence, 509 residues long: ATP synthase subunit alpha (509 aa).

169-176 (GDRQTGKT) provides a ligand contact to ATP.

Belongs to the ATPase alpha/beta chains family. As to quaternary structure, F-type ATPases have 2 components, CF(1) - the catalytic core - and CF(0) - the membrane proton channel. CF(1) has five subunits: alpha(3), beta(3), gamma(1), delta(1), epsilon(1). CF(0) has three main subunits: a(1), b(2) and c(9-12). The alpha and beta chains form an alternating ring which encloses part of the gamma chain. CF(1) is attached to CF(0) by a central stalk formed by the gamma and epsilon chains, while a peripheral stalk is formed by the delta and b chains.

The protein resides in the cell inner membrane. It catalyses the reaction ATP + H2O + 4 H(+)(in) = ADP + phosphate + 5 H(+)(out). Functionally, produces ATP from ADP in the presence of a proton gradient across the membrane. The alpha chain is a regulatory subunit. The protein is ATP synthase subunit alpha of Rhizobium leguminosarum bv. trifolii (strain WSM2304).